Here is a 247-residue protein sequence, read N- to C-terminus: Mannose-P-dolichol utilization defect 1 protein (247 aa).

The residue at position 2 (alanine 2) is an N-acetylalanine. 7 helical membrane-spanning segments follow: residues 37-57, 74-94, 100-120, 128-145, 151-171, 185-205, and 213-233; these read CLKI…SLLV, LSLQ…VYSI, FSSW…CFLV, VKGV…LVLL, LTVV…GRLL, LSAI…FTSI, and MAGT…QLLF. The 67-residue stretch at 39–105 folds into the PQ-loop 1 domain; it reads KILLSKGLGL…NNFPFSSWGE (67 aa). One can recognise a PQ-loop 2 domain in the interval 159-216; sequence ASNVPAVVVGRLLQAATNYHNGHTGQLSAITVFLLFGGSLARIFTSIQETGDPLMAGT.

It belongs to the MPDU1 (TC 2.A.43.3) family.

Its subcellular location is the membrane. Functionally, required for normal utilization of mannose-dolichol phosphate (Dol-P-Man) in the synthesis of N-linked and O-linked oligosaccharides and GPI anchors. This chain is Mannose-P-dolichol utilization defect 1 protein (MPDU1), found in Homo sapiens (Human).